The chain runs to 382 residues: Aminotransferase FGSG_00049 (382 aa).

Pyridoxal 5'-phosphate is bound at residue Arg-80. Residue Lys-181 is modified to N6-(pyridoxal phosphate)lysine. Glu-217 contacts pyridoxal 5'-phosphate.

This sequence belongs to the class-IV pyridoxal-phosphate-dependent aminotransferase family. Pyridoxal 5'-phosphate serves as cofactor.

It participates in mycotoxin biosynthesis. Its function is as follows. Aminotransferase; part of the gene cluster that mediates the biosynthesis of gramillins A and B, bicyclic lipopeptides that induce cell death in maize leaves but not in wheat leaves. The nonribosomal peptide synthetase GRA1 incorporates respectively a glutamic adic (Glu), a leucine (Leu), a serine (Ser), a hydroxyglutamine (HOGln), a 2-amino decanoic acid, and 2 cysteins (CysB and CysA). The biosynthesis of 2-amino decanoic acid incorporated in gramillins could be initiated by a fatty acid synthase composed of the alpha and beta subunits FGSG_00036 and FGSG_11656. The cytochrome P450 monooxygenase FGSG_15680 could hydroxylate the fatty acid chain. Subsequent oxidation to the ketone by the oxidoreductase FGSG_00048 and transamination by aminotransferase FGSG_00049 could form 2-amino-decanoic acid. On the other hand, FGSG_15680 could also be responsible for the HO-modified glutamine at the gamma-position. Whether hydroxylation occurs on the fully assembled product or on the Gln residue prior to assembly into the gramillins requires further proof. The thioredoxin FGSG_00043 could also be required for the disulfide-bond formation between CysA and CysB. The specific involvement of the remaining proteins from the cluster is more difficult to discern, but could have broader regulatory (FGSG_00040 and FGSG_11657) or enzymatic functions (FGSG_00044 and FGSG_00045). The final C-domain of GRA1 does not possess the expected sequence of a termination CT domain, often implicated in macrocyclization and release of a cyclopeptidein fungal NRPs; and the thioesterase FGSG_00047 may act in concert with the terminal C-domain of GRA1 to catalyze the formation of the macrocyclic anhydride and release of the products. The polypeptide is Aminotransferase FGSG_00049 (Gibberella zeae (strain ATCC MYA-4620 / CBS 123657 / FGSC 9075 / NRRL 31084 / PH-1) (Wheat head blight fungus)).